The following is a 382-amino-acid chain: Sphingoid long-chain base transporter RSB1 (382 aa).

Over 1–34 (MSNATNNTLGSLLPQLEAAANSNSLYGGMVPNLR) the chain is Extracellular. N-linked (GlcNAc...) asparagine glycans are attached at residues Asn3 and Asn6. Residues 35–55 (FNITMIVIWGILLTIHVVQLL) form a helical membrane-spanning segment. Topologically, residues 56–57 (MR) are cytoplasmic. The helical transmembrane segment at 58-78 (QYWFSIAFICTGILEVLGFIG) threads the bilayer. The Extracellular segment spans residues 79–90 (RTWSHSNVADMD). Residues 91 to 111 (AFLLNMICLTIAPVFTMGGIY) form a helical membrane-spanning segment. At 112-135 (YQLAKLIEVYGHRFSLLPSPMAYS) the chain is on the cytoplasmic side. The chain crosses the membrane as a helical span at residues 136–156 (FIFICSDIVSLVVQAVGGGLC). Residues 157-171 (GVAVTDGTSTTTGNH) are Extracellular-facing. Residues 172–192 (VFIAGLAIQVASMAIFLMLWF) traverse the membrane as a helical segment. The Cytoplasmic segment spans residues 193 to 241 (HFLFRIYISVRWEHINSRPISLSLLKISQTEVDYLYREKFHFLRLEPKR). Residues 242–262 (WVFHYFNLAITVAVLTIFTRC) form a helical membrane-spanning segment. Topologically, residues 263–281 (CYRLAELVVGWDGYLITHE) are extracellular. Residues 282-302 (WYFIILDALMMAIATVTLTIF) traverse the membrane as a helical segment. Topologically, residues 303 to 382 (HPGFAFKGKS…LFSSKKKAKL (80 aa)) are cytoplasmic.

The protein belongs to the lipid-translocating exporter (LTE) (TC 9.A.26.1) family.

The protein resides in the cell membrane. Catalyzes the ATP-dependent translocation of sphingoid long-chain bases (LCBs) from the cytoplasmic site toward the extracytoplasmic side of the membrane (flip-flop). Involved in the establishment of the functional lipid asymmetry of the plasma membrane. Regulates intracellular levels of LCBs, sphingolipid precursors that are growth inhibitory at increased levels. The polypeptide is Sphingoid long-chain base transporter RSB1 (RSB1) (Saccharomyces cerevisiae (strain JAY291) (Baker's yeast)).